A 177-amino-acid chain; its full sequence is Large ribosomal subunit protein uL6 (177 aa).

It belongs to the universal ribosomal protein uL6 family. In terms of assembly, part of the 50S ribosomal subunit.

In terms of biological role, this protein binds to the 23S rRNA, and is important in its secondary structure. It is located near the subunit interface in the base of the L7/L12 stalk, and near the tRNA binding site of the peptidyltransferase center. This chain is Large ribosomal subunit protein uL6, found in Rhodopseudomonas palustris (strain HaA2).